Consider the following 500-residue polypeptide: Lysine--tRNA ligase (500 aa).

Glu-410 and Glu-417 together coordinate Mg(2+).

This sequence belongs to the class-II aminoacyl-tRNA synthetase family. Homodimer. It depends on Mg(2+) as a cofactor.

It localises to the cytoplasm. It catalyses the reaction tRNA(Lys) + L-lysine + ATP = L-lysyl-tRNA(Lys) + AMP + diphosphate. The chain is Lysine--tRNA ligase from Shewanella baltica (strain OS155 / ATCC BAA-1091).